Consider the following 782-residue polypeptide: Small RNA degrading nuclease 3 (782 aa).

The Exonuclease domain maps to 145–296 (MLSIDCEMVT…HDAAAAMKLV (152 aa)). The 80-residue stretch at 331–410 (AQLFLHKIPH…KKAVLKLSSG (80 aa)) folds into the RRM 1 domain. The tract at residues 426-464 (PCEISTSERARAEENNVSSKRQKTEDETEETKEATVNQR) is disordered. Residues 469–549 (TKLFLHKIPH…KMVVFKLSSG (81 aa)) enclose the RRM 2 domain. The disordered stretch occupies residues 563–605 (DSPGEISTTKRARTEESNMSSKRQKTEDESEETKEANAKQREA). A coiled-coil region spans residues 577 to 605 (EESNMSSKRQKTEDESEETKEANAKQREA). A compositionally biased stretch (basic and acidic residues) spans 595–605 (TKEANAKQREA). The 81-residue stretch at 608 to 688 (TKLLLHKIPL…KMVAFKLSSG (81 aa)) folds into the RRM 3 domain. Residues 709–779 (ANANHCEDDH…KMKLEKKQSK (71 aa)) adopt a coiled-coil conformation.

This sequence belongs to the REXO1/REXO3 family. In terms of assembly, associated with the Mediator complex.

The protein localises to the nucleus. In terms of biological role, 3'-5' exonuclease degrading single-stranded small RNAs. The polypeptide is Small RNA degrading nuclease 3 (SDN3) (Arabidopsis thaliana (Mouse-ear cress)).